The chain runs to 543 residues: Glucose-6-phosphate isomerase (543 aa).

The active-site Proton donor is the glutamate 351. Catalysis depends on residues histidine 382 and lysine 511.

The protein belongs to the GPI family.

It localises to the cytoplasm. The catalysed reaction is alpha-D-glucose 6-phosphate = beta-D-fructose 6-phosphate. It participates in carbohydrate biosynthesis; gluconeogenesis. It functions in the pathway carbohydrate degradation; glycolysis; D-glyceraldehyde 3-phosphate and glycerone phosphate from D-glucose: step 2/4. Functionally, catalyzes the reversible isomerization of glucose-6-phosphate to fructose-6-phosphate. The polypeptide is Glucose-6-phosphate isomerase (Hydrogenovibrio crunogenus (strain DSM 25203 / XCL-2) (Thiomicrospira crunogena)).